The sequence spans 487 residues: Betaine aldehyde dehydrogenase (487 aa).

K(+) is bound by residues isoleucine 27 and aspartate 93. 149–151 (GAW) is a binding site for NAD(+). Lysine 161 functions as the Charge relay system in the catalytic mechanism. NAD(+) contacts are provided by residues 175 to 178 (KPSE) and 228 to 231 (SVPT). Glutamate 249 functions as the Proton acceptor in the catalytic mechanism. Residues glycine 251, cysteine 283, and glutamate 384 each contribute to the NAD(+) site. Cysteine 283 serves as the catalytic Nucleophile. Cysteine 283 carries the post-translational modification Cysteine sulfenic acid (-SOH). K(+) is bound by residues lysine 454 and glycine 457. Catalysis depends on glutamate 461, which acts as the Charge relay system.

Belongs to the aldehyde dehydrogenase family. Dimer of dimers. The cofactor is K(+).

It carries out the reaction betaine aldehyde + NAD(+) + H2O = glycine betaine + NADH + 2 H(+). It participates in amine and polyamine biosynthesis; betaine biosynthesis via choline pathway; betaine from betaine aldehyde: step 1/1. Functionally, involved in the biosynthesis of the osmoprotectant glycine betaine. Catalyzes the irreversible oxidation of betaine aldehyde to the corresponding acid. The sequence is that of Betaine aldehyde dehydrogenase from Mesorhizobium japonicum (strain LMG 29417 / CECT 9101 / MAFF 303099) (Mesorhizobium loti (strain MAFF 303099)).